Consider the following 405-residue polypeptide: Argininosuccinate synthase (405 aa).

Residues 10 to 18 (AYSGGLDTS) and Ala37 each bind ATP. Positions 88 and 93 each coordinate L-citrulline. Gly118 contributes to the ATP binding site. Residues Thr120, Asn124, and Asp125 each contribute to the L-aspartate site. An L-citrulline-binding site is contributed by Asn124. L-citrulline contacts are provided by Arg128, Ser179, Ser188, Glu264, and Tyr276.

This sequence belongs to the argininosuccinate synthase family. Type 1 subfamily. In terms of assembly, homotetramer.

It localises to the cytoplasm. It carries out the reaction L-citrulline + L-aspartate + ATP = 2-(N(omega)-L-arginino)succinate + AMP + diphosphate + H(+). It participates in amino-acid biosynthesis; L-arginine biosynthesis; L-arginine from L-ornithine and carbamoyl phosphate: step 2/3. This Pseudomonas syringae pv. syringae (strain B728a) protein is Argininosuccinate synthase.